Reading from the N-terminus, the 296-residue chain is Urease operon transcriptional activator (296 aa).

The HTH araC/xylS-type domain maps to 171–268; that stretch reads QAITHLITQE…NMTPSQFRLQ (98 aa). DNA-binding regions (H-T-H motif) lie at residues 188–209 and 235–258; these read DDVA…NREG and VFQI…KRKY.

In terms of biological role, positive regulator of the expression of the urease operon. This chain is Urease operon transcriptional activator (ureR), found in Escherichia coli.